The primary structure comprises 471 residues: Secretogranin-3 (471 aa).

Positions 1-22 (MGFLWTGSWILVLVLNSGPIQA) are cleaved as a signal peptide. Disordered regions lie at residues 24 to 73 (PKPE…SNFS), 92 to 145 (KAKQ…HQLD), 208 to 231 (ANNY…KIPE), and 345 to 405 (KLEK…DEAK). Basic and acidic residues predominate over residues 28–45 (GSQDKSLHNRELSAERPL). Residue Ser40 is modified to Phosphoserine. Ser40 is a glycosylation site (O-linked (Xyl...) (chondroitin sulfate) serine). Positions 62-73 (PSESKPSESNFS) are enriched in low complexity. Composition is skewed to basic and acidic residues over residues 106–142 (LNVD…DGLH), 214–231 (APEK…KIPE), 345–355 (KLEKNTTDSKS), and 363–405 (EKSH…DEAK). At Ser365 the chain carries Phosphoserine.

As to quaternary structure, interacts with CHGA. Interacts with secretogranin II/SCG2. Interacts (via C-terminus) with CPE. Expression restricted to the brain and pituitary gland. Not detected in the adrenal gland.

It localises to the cytoplasmic vesicle. It is found in the secretory vesicle. The protein resides in the secretory vesicle membrane. The protein localises to the secreted. Member of the granin protein family that regulates the biogenesis of secretory granules. Acts as a sorting receptor for intragranular proteins including chromogranin A/CHGA. May also play a role in angiogenesis. Promotes endothelial proliferation, migration and tube formation through MEK/ERK signaling pathway. In Rattus norvegicus (Rat), this protein is Secretogranin-3 (Scg3).